We begin with the raw amino-acid sequence, 295 residues long: Tetrahydromethanopterin S-methyltransferase subunit E (295 aa).

A run of 7 helical transmembrane segments spans residues 4–24 (MITG…AGAA), 60–80 (GEPV…FVLM), 87–107 (VIMA…TYAV), 140–160 (GFIV…PIPG), 161–181 (FAHP…IGAI), 234–254 (YGGP…FWNT), and 255–275 (IVFG…LLII).

This sequence belongs to the MtrE family. In terms of assembly, the complex is composed of 8 subunits; MtrA, MtrB, MtrC, MtrD, MtrE, MtrF, MtrG and MtrH.

It localises to the cell membrane. The enzyme catalyses 5-methyl-5,6,7,8-tetrahydromethanopterin + coenzyme M + 2 Na(+)(in) = 5,6,7,8-tetrahydromethanopterin + methyl-coenzyme M + 2 Na(+)(out). Its pathway is one-carbon metabolism; methanogenesis from CO(2); methyl-coenzyme M from 5,10-methylene-5,6,7,8-tetrahydromethanopterin: step 2/2. Functionally, part of a complex that catalyzes the formation of methyl-coenzyme M and tetrahydromethanopterin from coenzyme M and methyl-tetrahydromethanopterin. This is an energy-conserving, sodium-ion translocating step. The chain is Tetrahydromethanopterin S-methyltransferase subunit E from Methanothermobacter marburgensis (strain ATCC BAA-927 / DSM 2133 / JCM 14651 / NBRC 100331 / OCM 82 / Marburg) (Methanobacterium thermoautotrophicum).